The following is a 299-amino-acid chain: MEELEQGLLMQPWAWLQLAENSLLAKVFITKQGYALLVSDLQQVWHEQVDTSVVSQRAKELNKRLTAPPAAFLCHLDNLLRPLLKDAAHPSEATFSCDCVADALILRVRSELSGLPFYWNFHCMLASPSLVSQHLIRPLMGMSLALQCQVRELATLLHMKDLEIQDYQESGATLIRDRLKTEPFEENSFLEQFMIEKLPEACSIGDGKPFVMNLQDLYMAVTTQEVQVGQKHQGAGDPHTSNSASLQGIDSQCVNQPEQLVSSAPTLSAPEKESTGTSGPLQRPQLSKVKRKKPRGLFS.

A globular head region spans residues 1 to 135 (MEELEQGLLM…ASPSLVSQHL (135 aa)). Residues 128–170 (PSLVSQHLIRPLMGMSLALQCQVRELATLLHMKDLEIQDYQES) are a coiled coil. Phosphoserine; by PRKDC is present on residues Ser132, Ser203, Ser245, and Ser251. Residues 224-288 (QEVQVGQKHQ…GPLQRPQLSK (65 aa)) are C-terminal tail. Over residues 255 to 266 (NQPEQLVSSAPT) the composition is skewed to polar residues. Residues 255-299 (NQPEQLVSSAPTLSAPEKESTGTSGPLQRPQLSKVKRKKPRGLFS) are disordered. Ser263 bears the Phosphoserine mark. Residue Thr266 is modified to Phosphothreonine. Phosphoserine is present on Ser287. Residues 288–299 (KVKRKKPRGLFS) show a composition bias toward basic residues. An XLM motif is present at residues 289–299 (VKRKKPRGLFS).

It belongs to the XRCC4-XLF family. XLF subfamily. Homodimer; mainly exists as a homodimer when not associated with XRCC4. Interacts with XRCC4; the interaction is direct and is mediated via a head-to-head interaction between N-terminal head regions. Component of the core long-range non-homologous end joining (NHEJ) complex (also named DNA-PK complex) composed of PRKDC, LIG4, XRCC4, XRCC6/Ku70, XRCC5/Ku86 and NHEJ1/XLF. Additional component of the NHEJ complex includes PAXX. Following autophosphorylation, PRKDC dissociates from DNA, leading to formation of the short-range NHEJ complex, composed of LIG4, XRCC4, XRCC6/Ku70, XRCC5/Ku86 and NHEJ1/XLF. Interacts with POLL (DNA polymerase lambda); promoting POLL recruitment to double-strand breaks (DSBs) and stimulation of the end-filling activity of POLL. Phosphorylated by PRKDC at the C-terminus in response to DNA damage. Phosphorylations by PRKDC at the C-terminus of XRCC4 and NHEJ1/XLF are highly redundant and regulate ability of the XRCC4-NHEJ1/XLF subcomplex to bridge DNA. Phosphorylation does not prevent interaction with XRCC4 but disrupts ability to bridge DNA and promotes detachment from DNA. Ubiquitously expressed.

The protein resides in the nucleus. The protein localises to the chromosome. Functionally, DNA repair protein involved in DNA non-homologous end joining (NHEJ); it is required for double-strand break (DSB) repair and V(D)J recombination and is also involved in telomere maintenance. Plays a key role in NHEJ by promoting the ligation of various mismatched and non-cohesive ends. Together with PAXX, collaborates with DNA polymerase lambda (POLL) to promote joining of non-cohesive DNA ends. May act in concert with XRCC5-XRCC6 (Ku) to stimulate XRCC4-mediated joining of blunt ends and several types of mismatched ends that are non-complementary or partially complementary. In some studies, has been shown to associate with XRCC4 to form alternating helical filaments that bridge DNA and act like a bandage, holding together the broken DNA until it is repaired. Alternatively, it has also been shown that rather than forming filaments, a single NHEJ1 dimer interacts through both head domains with XRCC4 to promote the close alignment of DNA ends. The XRCC4-NHEJ1/XLF subcomplex binds to the DNA fragments of a DSB in a highly diffusive manner and robustly bridges two independent DNA molecules, holding the broken DNA fragments in close proximity to one other. The mobility of the bridges ensures that the ends remain accessible for further processing by other repair factors. Binds DNA in a length-dependent manner. This chain is Non-homologous end-joining factor 1, found in Homo sapiens (Human).